A 739-amino-acid polypeptide reads, in one-letter code: Double-strand break repair protein mus-23 (739 aa).

Residues Asp16, His18, Asp56, and Asn123 each contribute to the Mn(2+) site. Residue His124 is the Proton donor of the active site. Mn(2+) contacts are provided by His212, His240, and His242. The disordered stretch occupies residues 516 to 739; sequence FDAGQHKQAQ…KPGLLARRLG (224 aa). Positions 523–532 are enriched in basic residues; sequence QAQRTKRFKR. A compositionally biased stretch (basic and acidic residues) spans 559–568; it reads VEPKGNDRPT. The segment covering 599–636 has biased composition (low complexity); the sequence is KRGAAAKTTAAAKKAAPGKKAAPAKKAAPAKKAAPAKK. Residues 637–646 are compositionally biased toward basic residues; the sequence is APARGRKKKT. The segment covering 650 to 686 has biased composition (acidic residues); it reads DSDEEEEEDYPEDDDEEEEEADEEEEDVIMEDDEEDP. Residues 694 to 722 are compositionally biased toward low complexity; that stretch reads KATSRVASTRASARATPVRATPARATQAR.

It belongs to the MRE11/RAD32 family. Component of the MRN complex composed of two heterodimers RAD50 and MRE11 associated with a single NBS1. Requires Mn(2+) as cofactor.

It is found in the nucleus. The protein resides in the chromosome. It localises to the telomere. Its function is as follows. Core component of the MRN complex, which plays a central role in double-strand break (DSB) repair, DNA recombination, maintenance of telomere integrity and meiosis. The MRN complex is involved in the repair of DNA double-strand breaks (DSBs) via homologous recombination (HR), an error-free mechanism which primarily occurs during S and G2 phases. The complex (1) mediates the end resection of damaged DNA, which generates proper single-stranded DNA, a key initial steps in HR, and is (2) required for the recruitment of other repair factors and efficient activation of ATM and ATR upon DNA damage. Within the MRN complex, MRE11 possesses both single-strand endonuclease activity and double-strand-specific 3'-5' exonuclease activity. MRE11 first endonucleolytically cleaves the 5' strand at DNA DSB ends to prevent non-homologous end joining (NHEJ) and licence HR. It then generates a single-stranded DNA gap via 3' to 5' exonucleolytic degradation, which is required for single-strand invasion and recombination. The MRN complex is also required for the processing of R-loops. The sequence is that of Double-strand break repair protein mus-23 (mus-23) from Neurospora crassa (strain ATCC 24698 / 74-OR23-1A / CBS 708.71 / DSM 1257 / FGSC 987).